The chain runs to 297 residues: Thoeris protein ThsA (297 aa).

The next 2 helical transmembrane spans lie at 32-52 and 57-77; these read ALSI…FLDL and RLII…VQFI.

It localises to the cell membrane. Activated by a signal molecule generated by ThsB. Functionally, probable membrane protein component of the Thoeris antiviral defense system, composed of ThsA and ThsB. Expression of ThsA and ThsB in B.subtilis (strain BEST7003) confers resistance to phages SBSphiC, SBSphiJ and SPO1. Activation by a signal generated by ThsB leads to phage resistance. The sequence is that of Thoeris protein ThsA from Bacillus amyloliquefaciens (strain Y2) (Bacillus amyloliquefaciens subsp. plantarum (strain B9601-Y2)).